The following is a 278-amino-acid chain: Envelope glycoprotein L (278 aa).

Residues 1–30 (MCRRPDCGFSFSPGPVILLWCCLLLPIVSS) form the signal peptide. Residues 43 to 256 (VPAECPELTR…DKYYAGLPPE (214 aa)) form the gL betaherpesvirus-type domain. Cysteines 154 and 159 form a disulfide.

The protein belongs to the herpesviridae glycoprotein L (gL) family. Betaherpesvirinae gL subfamily. Interacts with glycoprotein H (gH); this interaction is necessary for the correct processing and cell surface expression of gH. Forms the envelope pentamer complex (PC) composed of gH, gL, UL128, UL130, and UL131A. The pentamer interacts with host NRP2. Forms the envelope trimer complex composed of gH, gL, and gO. The trimer interacts with host PDGFRA. The trimer also interacts with host EPHA2.

The protein localises to the virion membrane. The protein resides in the host cell membrane. It localises to the host Golgi apparatus. It is found in the host trans-Golgi network. Functionally, the heterodimer glycoprotein H-glycoprotein L is required for the fusion of viral and plasma membranes leading to virus entry into the host cell. Acts as a functional inhibitor of gH and maintains gH in an inhibited form. Upon binding to host integrins, gL dissociates from gH leading to activation of the viral fusion glycoproteins gB and gH. In human cytomegalovirus, forms two distincts complexes to mediate viral entry, a trimer and a pentamer at the surface of the virion envelope. The gH-gL-gO trimer is required for infection in fibroblasts by interacting with host PDGFRA, and in glioblastoma cells by interacting with host EPHA2. The gH-gL-UL128-UL130-UL131A pentamer is essential for viral entry in epithelial, endothelial and myeloid cells via interaction with host NRP2. This chain is Envelope glycoprotein L, found in Homo sapiens (Human).